The chain runs to 313 residues: MAPALTLEKPVETNAFPRKAASVETSENYEGNYKFAPIEEAQVSRAMIKRYFNTMYDRAISDVVIVGAGSAGLSCAYSLATQRPDLKITIVEAGVAPGGGAWLGGQLMTPMVIRKPADAFLRELGVPYEDEGNFVVVKHAALFTSTLLSKVLAKPNVVMMNATAVEDLIVHEDFAGQQRVAGVVTNWTLVALNHDTQSCMDPNTITAPVIVSATGHDGPMGAFSAKRLVSTGLLKELGNMRGLDMNRAEPAIVNGTREVVPGLILTGMELSEHDGSNRMGPTFGAMIGSGHKAAHEAIRILDRHKVVNGKVVA.

Residues Ala-71, 92-93, Gly-100, and Val-165 contribute to the substrate site; that span reads EA. Cys-199 is modified (2,3-didehydroalanine (Cys)). Substrate is bound by residues Asp-201, His-216, Met-268, and 278–280; that span reads RMG.

It belongs to the THI4 family. Homooctamer. Fe cation is required as a cofactor. Post-translationally, during the catalytic reaction, a sulfide is transferred from Cys-199 to a reaction intermediate, generating a dehydroalanine residue.

It localises to the cytoplasm. It is found in the nucleus. The enzyme catalyses [ADP-thiazole synthase]-L-cysteine + glycine + NAD(+) = [ADP-thiazole synthase]-dehydroalanine + ADP-5-ethyl-4-methylthiazole-2-carboxylate + nicotinamide + 3 H2O + 2 H(+). Involved in biosynthesis of the thiamine precursor thiazole. Catalyzes the conversion of NAD and glycine to adenosine diphosphate 5-(2-hydroxyethyl)-4-methylthiazole-2-carboxylic acid (ADT), an adenylated thiazole intermediate. The reaction includes an iron-dependent sulfide transfer from a conserved cysteine residue of the protein to a thiazole intermediate. The enzyme can only undergo a single turnover, which suggests it is a suicide enzyme. May have additional roles in adaptation to various stress conditions and in DNA damage tolerance. The polypeptide is Thiamine thiazole synthase (Coprinopsis cinerea (strain Okayama-7 / 130 / ATCC MYA-4618 / FGSC 9003) (Inky cap fungus)).